The sequence spans 492 residues: Lysine--tRNA ligase (492 aa).

Mg(2+) contacts are provided by Glu403 and Glu410.

It belongs to the class-II aminoacyl-tRNA synthetase family. In terms of assembly, homodimer. Requires Mg(2+) as cofactor.

The protein resides in the cytoplasm. The catalysed reaction is tRNA(Lys) + L-lysine + ATP = L-lysyl-tRNA(Lys) + AMP + diphosphate. The protein is Lysine--tRNA ligase of Mycoplasmoides gallisepticum (strain R(low / passage 15 / clone 2)) (Mycoplasma gallisepticum).